We begin with the raw amino-acid sequence, 23 residues long: Thymidine phosphorylase (23 aa).

The protein belongs to the thymidine/pyrimidine-nucleoside phosphorylase family. In terms of assembly, homodimer.

The enzyme catalyses thymidine + phosphate = 2-deoxy-alpha-D-ribose 1-phosphate + thymine. The enzymes which catalyze the reversible phosphorolysis of pyrimidine nucleosides are involved in the degradation of these compounds and in their utilization as carbon and energy sources, or in the rescue of pyrimidine bases for nucleotide synthesis. This is Thymidine phosphorylase (deoA) from Lacticaseibacillus rhamnosus (Lactobacillus rhamnosus).